A 587-amino-acid polypeptide reads, in one-letter code: MKIVRYIALFGILSGLAVACTPSTSVIPNDAIRLNQLGYYPNQEKIAVVDSGKVEEFVIWDAVSGEQVFVGKSLYTAKSAWSDKTRTTLDFSAVTTPGKYILKVNGASVTFLIKDSVLSPLADAALKSFYYQRTAMPIEEQYAGQWHRMAGHPDNHVLIHPSAASPDRPAGTIVSSSKGWYDAGDYNKYIVNSGYSIGLMQSIYQLFLDYFSRQKINIPESNNHTPDLLDEMQFNLDWMLTMQDPEDGGVYHKLTTPFFEGFVKPVDCKQQRYVVQKSVTAALDFAAVMAQSSRLFASYEEDYPGFSKRALLAAEKAYAWAEKHPEAYYNQNLLNQKYQPAIATGEYGDTHADDEFFWAASELYFSTGKEIYREEAIKKAPQIYTAPGWGNTFALGIFAWLQPGRELNEADRRFADSLKTELLKYADKVIEGAEQTPFHAPYGNDAKDFFWGCLAEKCMNQGVSLMYAYLQTGKDVYLTNAYRNMDYILGRNATGFCYVTGLGTKSPKHPHHRLSASDDIEDPIPGFLVGGPNPGQQDGAFYPTASPDESYVDTEDSYASNEVAINWNAALVALASSLDALAVYSVK.

An N-terminal signal peptide occupies residues 1–19 (MKIVRYIALFGILSGLAVA). Cys20 is lipidated: N-palmitoyl cysteine. Residue Cys20 is the site of S-diacylglycerol cysteine attachment. Asp185 functions as the Nucleophile in the catalytic mechanism. Residues His511 and Asp553 contribute to the active site. Residue Glu562 is the Proton donor of the active site.

Belongs to the glycosyl hydrolase 9 (cellulase E) family.

It is found in the cell outer membrane. It carries out the reaction xyloglucan + H2O = xyloglucan oligosaccharides.. It participates in glucan metabolism; xyloglucan degradation. Functionally, catalyzes endohydrolysis of 1,4-beta-D-glucosidic linkages in xyloglucan with retention of the beta-configuration of the glycosyl residues in xyloglucan degradation. Cleaves the backbone of the 3 major types of natural xyloglucans (seed galactoxyloglucan from tamarind kernel, dicot fucogalactoxyloglucan from lettuce leaves, and solanaceous arabinogalactoxyloglucan from tomato fruit), to produce xyloglucan oligosaccharides. May be superfluous in xyloglucan degradation compared to BoGH5A (AC A7LXT7), the other Xyloglucan-specific endo-beta-1,4-glucanase. This is Xyloglucan-specific endo-beta-1,4-glucanase BoGH9A from Bacteroides ovatus (strain ATCC 8483 / DSM 1896 / JCM 5824 / BCRC 10623 / CCUG 4943 / NCTC 11153).